Here is a 122-residue protein sequence, read N- to C-terminus: Small ribosomal subunit protein uS13 (122 aa).

The disordered stretch occupies residues 97-122; that stretch reads PVRGQRTHTNARTRKGPAKAIAGKKK.

It belongs to the universal ribosomal protein uS13 family. In terms of assembly, part of the 30S ribosomal subunit. Forms a loose heterodimer with protein S19. Forms two bridges to the 50S subunit in the 70S ribosome.

Its function is as follows. Located at the top of the head of the 30S subunit, it contacts several helices of the 16S rRNA. In the 70S ribosome it contacts the 23S rRNA (bridge B1a) and protein L5 of the 50S subunit (bridge B1b), connecting the 2 subunits; these bridges are implicated in subunit movement. Contacts the tRNAs in the A and P-sites. The protein is Small ribosomal subunit protein uS13 of Bartonella tribocorum (strain CIP 105476 / IBS 506).